The primary structure comprises 158 residues: Small ribosomal subunit protein uS9 (158 aa).

It belongs to the universal ribosomal protein uS9 family.

The sequence is that of Small ribosomal subunit protein uS9 from Brucella abortus (strain S19).